The primary structure comprises 105 residues: uncharacterized protein (105 aa).

The helical transmembrane segment at 8-28 (FMTAGIIIALIIAVLAPFLAS) threads the bilayer. The tract at residues 32-53 (DGLESTAEKVMPNPETEPVLES) is disordered. Residues 72–92 (VSMVIGTILVLAIAYGVGAVF) traverse the membrane as a helical segment.

This sequence to M.jannaschii MJ1570.

It localises to the cell membrane. This is an uncharacterized protein from Methanothermobacter thermautotrophicus (strain ATCC 29096 / DSM 1053 / JCM 10044 / NBRC 100330 / Delta H) (Methanobacterium thermoautotrophicum).